Here is a 342-residue protein sequence, read N- to C-terminus: MEAVQQNHSVCRGYCGVMLRSRSGGFFRRGFMLGNVEVILARPRGFCAGVERAVRTLESVASRYAGTREVYALHEIVHNLHVVNSFKKMGVKFVSALHEVPEGAVLVFSAHGVSQQVKEESRRKGLTVVDATCPLVTKVHLEIQRYDKSGYQVILVGHKGHREVEGSMGQVSNPVVLVQNVQDVQSIKIPSAAKLAYVTQTTLSMDDTAEIISALKLRFPRIVGPDLRDICYATQNRQTAVKAMSQMVDVVLAIGSKNSSNSNRLLDLAKAQNARAYLIDSYRNIDLEWLIGARRIGITAGASAPEILVQEVIDYLGLHANLKVRTMDGVSENITFKLPELD.

Cys-47 contributes to the [4Fe-4S] cluster binding site. Residues His-78 and His-111 each coordinate (2E)-4-hydroxy-3-methylbut-2-enyl diphosphate. Residues His-78 and His-111 each contribute to the dimethylallyl diphosphate site. His-78 and His-111 together coordinate isopentenyl diphosphate. Position 133 (Cys-133) interacts with [4Fe-4S] cluster. His-161 is a binding site for (2E)-4-hydroxy-3-methylbut-2-enyl diphosphate. Position 161 (His-161) interacts with dimethylallyl diphosphate. His-161 serves as a coordination point for isopentenyl diphosphate. The Proton donor role is filled by Glu-163. Thr-201 contacts (2E)-4-hydroxy-3-methylbut-2-enyl diphosphate. Cys-231 contributes to the [4Fe-4S] cluster binding site. The (2E)-4-hydroxy-3-methylbut-2-enyl diphosphate site is built by Ser-259, Ser-260, Asn-261, and Ser-303. Ser-259, Ser-260, Asn-261, and Ser-303 together coordinate dimethylallyl diphosphate. Isopentenyl diphosphate-binding residues include Ser-259, Ser-260, Asn-261, and Ser-303.

It belongs to the IspH family. [4Fe-4S] cluster is required as a cofactor.

The enzyme catalyses isopentenyl diphosphate + 2 oxidized [2Fe-2S]-[ferredoxin] + H2O = (2E)-4-hydroxy-3-methylbut-2-enyl diphosphate + 2 reduced [2Fe-2S]-[ferredoxin] + 2 H(+). It catalyses the reaction dimethylallyl diphosphate + 2 oxidized [2Fe-2S]-[ferredoxin] + H2O = (2E)-4-hydroxy-3-methylbut-2-enyl diphosphate + 2 reduced [2Fe-2S]-[ferredoxin] + 2 H(+). It functions in the pathway isoprenoid biosynthesis; dimethylallyl diphosphate biosynthesis; dimethylallyl diphosphate from (2E)-4-hydroxy-3-methylbutenyl diphosphate: step 1/1. The protein operates within isoprenoid biosynthesis; isopentenyl diphosphate biosynthesis via DXP pathway; isopentenyl diphosphate from 1-deoxy-D-xylulose 5-phosphate: step 6/6. In terms of biological role, catalyzes the conversion of 1-hydroxy-2-methyl-2-(E)-butenyl 4-diphosphate (HMBPP) into a mixture of isopentenyl diphosphate (IPP) and dimethylallyl diphosphate (DMAPP). Acts in the terminal step of the DOXP/MEP pathway for isoprenoid precursor biosynthesis. In Anaplasma marginale (strain St. Maries), this protein is 4-hydroxy-3-methylbut-2-enyl diphosphate reductase.